The primary structure comprises 202 residues: Ig delta chain C region (202 aa).

The segment at 32–58 is disordered; it reads KSKTFKLPETRNSQSSKKANPTPQAKN. Polar residues predominate over residues 41–56; that stretch reads TRNSQSSKKANPTPQA. The 113-residue stretch at 66–178 folds into the Ig-like domain; that stretch reads PTATKNIVGA…TKLNASKSLE (113 aa).

The chain is Ig delta chain C region from Rattus norvegicus (Rat).